Reading from the N-terminus, the 95-residue chain is Protein TusB (95 aa).

It belongs to the DsrH/TusB family. As to quaternary structure, heterohexamer, formed by a dimer of trimers. The hexameric TusBCD complex contains 2 copies each of TusB, TusC and TusD. The TusBCD complex interacts with TusE.

It is found in the cytoplasm. In terms of biological role, part of a sulfur-relay system required for 2-thiolation of 5-methylaminomethyl-2-thiouridine (mnm(5)s(2)U) at tRNA wobble positions. This Escherichia coli (strain K12 / MC4100 / BW2952) protein is Protein TusB.